The sequence spans 392 residues: Glucan endo-1,3-beta-glucosidase 14 (392 aa).

An N-terminal signal peptide occupies residues Met-1–Ser-21. N-linked (GlcNAc...) asparagine glycans are attached at residues Asn-54 and Asn-89. The active-site Proton donor is the Glu-122. Glu-267 serves as the catalytic Nucleophile. A lipid anchor (GPI-anchor amidated serine) is attached at Ser-359. Residues Arg-360–Arg-392 constitute a propeptide, removed in mature form.

This sequence belongs to the glycosyl hydrolase 17 family.

The protein localises to the cell membrane. The protein resides in the secreted. It is found in the cell wall. Its subcellular location is the cytoplasm. It carries out the reaction Hydrolysis of (1-&gt;3)-beta-D-glucosidic linkages in (1-&gt;3)-beta-D-glucans.. This chain is Glucan endo-1,3-beta-glucosidase 14, found in Arabidopsis thaliana (Mouse-ear cress).